We begin with the raw amino-acid sequence, 114 residues long: Large ribosomal subunit protein uL18 (114 aa).

The protein belongs to the universal ribosomal protein uL18 family. As to quaternary structure, part of the 50S ribosomal subunit; part of the 5S rRNA/L5/L18/L25 subcomplex. Contacts the 5S and 23S rRNAs.

In terms of biological role, this is one of the proteins that bind and probably mediate the attachment of the 5S RNA into the large ribosomal subunit, where it forms part of the central protuberance. This Bacteroides fragilis (strain ATCC 25285 / DSM 2151 / CCUG 4856 / JCM 11019 / LMG 10263 / NCTC 9343 / Onslow / VPI 2553 / EN-2) protein is Large ribosomal subunit protein uL18.